The sequence spans 606 residues: Chaperone protein DnaK (606 aa).

Position 174 is a phosphothreonine; by autocatalysis (Thr174). Positions 579-593 (ASAAGNPGQGQTNEN) are enriched in polar residues. Residues 579-606 (ASAAGNPGQGQTNENPGGKTIDGDYKVN) form a disordered region.

This sequence belongs to the heat shock protein 70 family.

Acts as a chaperone. This is Chaperone protein DnaK from Dictyoglomus thermophilum (strain ATCC 35947 / DSM 3960 / H-6-12).